A 310-amino-acid chain; its full sequence is Probable cell division protein WhiA (310 aa).

Residues 277 to 310 (SLKELAEQVPDGPISKSGVNHRLKKLHEIAENLR) constitute a DNA-binding region (H-T-H motif).

The protein belongs to the WhiA family.

In terms of biological role, involved in cell division and chromosome segregation. The sequence is that of Probable cell division protein WhiA from Lactobacillus delbrueckii subsp. bulgaricus (strain ATCC BAA-365 / Lb-18).